The chain runs to 388 residues: Nitric oxide reductase FlRd-NAD(+) reductase (388 aa).

This sequence belongs to the FAD-dependent oxidoreductase family. The cofactor is FAD.

It localises to the cytoplasm. The enzyme catalyses 2 reduced [nitric oxide reductase rubredoxin domain] + NAD(+) + H(+) = 2 oxidized [nitric oxide reductase rubredoxin domain] + NADH. It functions in the pathway nitrogen metabolism; nitric oxide reduction. In terms of biological role, one of at least two accessory proteins for anaerobic nitric oxide (NO) reductase. Reduces the rubredoxin moiety of NO reductase. The polypeptide is Nitric oxide reductase FlRd-NAD(+) reductase (Aeromonas salmonicida (strain A449)).